Reading from the N-terminus, the 261-residue chain is Proteasome assembly chaperone 2 (261 aa).

It belongs to the PSMG2 family. In terms of assembly, forms a heterodimer with psmg1. Degraded by the proteasome upon completion of 20S proteasome maturation.

It is found in the nucleus. Its function is as follows. Chaperone protein which promotes assembly of the 20S proteasome as part of a heterodimer with psmg1. In Xenopus tropicalis (Western clawed frog), this protein is Proteasome assembly chaperone 2.